Consider the following 451-residue polypeptide: Jacalin-related lectin 35 (451 aa).

The residue at position 2 (A2) is an N-acetylalanine. Jacalin-type lectin domains follow at residues 2-143 (AKKL…YIIP), 156-297 (LTKL…YIIP), and 306-448 (SNTI…NVAP).

The protein belongs to the jacalin lectin family. As to quaternary structure, component of the PYK10 complex, at least composed of PYK10/BGLU23, BGLU21, BGLU22, JAL22, JAL23, PBP1/JAL30, PBP2/JAL31, JAL32, JAL33, JAL34, JAL35, GLL22 and GLL23.

The chain is Jacalin-related lectin 35 (JAL35) from Arabidopsis thaliana (Mouse-ear cress).